We begin with the raw amino-acid sequence, 438 residues long: Transposon Ty2-F Gag polyprotein (438 aa).

Polar residues-rich tracts occupy residues 1–11 (MESQQLHQNPH), 19–39 (ASVT…SASN), and 49–60 (KVNSQQETTPGT). 3 disordered regions span residues 1–86 (MESQ…GQYQ), 366–397 (VSRT…AKAH), and 419–438 (SSQY…TERI). Positions 295-397 (ENNINVSDRL…SSKPRAAKAH (103 aa)) are RNA-binding. The segment covering 369–381 (TSPNTTNTKVTTR) has biased composition (low complexity).

Homotrimer.

The protein localises to the cytoplasm. Capsid protein (CA) is the structural component of the virus-like particle (VLP), forming the shell that encapsulates the retrotransposons dimeric RNA genome. The particles are assembled from trimer-clustered units and there are holes in the capsid shells that allow for the diffusion of macromolecules. CA also has nucleocapsid-like chaperone activity, promoting primer tRNA(i)-Met annealing to the multipartite primer-binding site (PBS), dimerization of Ty2 RNA and initiation of reverse transcription. In Saccharomyces cerevisiae (strain ATCC 204508 / S288c) (Baker's yeast), this protein is Transposon Ty2-F Gag polyprotein (TY2A-F).